The sequence spans 305 residues: UDP-N-acetylenolpyruvoylglucosamine reductase 2 (305 aa).

Residues 33 to 197 (VGGKADVFVA…LEARFELEEG (165 aa)) form the FAD-binding PCMH-type domain. The active site involves arginine 176. Residue serine 226 is the Proton donor of the active site. Glutamate 296 is a catalytic residue.

It belongs to the MurB family. FAD is required as a cofactor.

The protein resides in the cytoplasm. It catalyses the reaction UDP-N-acetyl-alpha-D-muramate + NADP(+) = UDP-N-acetyl-3-O-(1-carboxyvinyl)-alpha-D-glucosamine + NADPH + H(+). It participates in cell wall biogenesis; peptidoglycan biosynthesis. Functionally, cell wall formation. The polypeptide is UDP-N-acetylenolpyruvoylglucosamine reductase 2 (murB2) (Bacillus cereus (strain ATCC 14579 / DSM 31 / CCUG 7414 / JCM 2152 / NBRC 15305 / NCIMB 9373 / NCTC 2599 / NRRL B-3711)).